The chain runs to 567 residues: Phosphoglucomutase-like protein 5 (567 aa).

The interval 1–26 (MEGSPIPVLTVPTAPYEDQRPTGGGG) is disordered. At threonine 120 the chain carries Phosphothreonine. The residue at position 122 (serine 122) is a Phosphoserine.

This sequence belongs to the phosphohexose mutase family. In terms of assembly, interacts with DMD/dystrophin; the interaction is direct. Interacts with UTRN/utrophin.

Its subcellular location is the cell junction. The protein localises to the adherens junction. It localises to the cytoplasm. The protein resides in the cytoskeleton. It is found in the cell membrane. Its subcellular location is the sarcolemma. Its function is as follows. Component of adherens-type cell-cell and cell-matrix junctions. Has no phosphoglucomutase activity in vitro. In Mus musculus (Mouse), this protein is Phosphoglucomutase-like protein 5.